Reading from the N-terminus, the 105-residue chain is BLOC-1-related complex subunit 7 (105 aa).

This sequence belongs to the BORCS7 family. As to quaternary structure, component of the BLOC-one-related complex (BORC) which is composed of BLOC1S1, BLOC1S2, BORCS5, BORCS6, BORCS7, BORCS8, KXD1 and SNAPIN.

It is found in the lysosome membrane. Functionally, as part of the BORC complex may play a role in lysosomes movement and localization at the cell periphery. Associated with the cytosolic face of lysosomes, the BORC complex may recruit ARL8B and couple lysosomes to microtubule plus-end-directed kinesin motor. The protein is BLOC-1-related complex subunit 7 of Bos taurus (Bovine).